The following is a 510-amino-acid chain: Leucine-rich repeat-containing protein 53 (510 aa).

LRR repeat units lie at residues 34–55, 58–79, 82–102, 108–129, 132–153, 158–179, and 182–203; these read TTRV…NLSL, NLAL…ALDG, MLRT…TDHT, SLQV…WFRN, GLTR…SFGG, SLRH…AFRP, and QLQE…FTPL. Positions 214–271 constitute an LRRCT domain; the sequence is NQWSCTCDLHPLARFLRNYIKSSAHTLRNAKDLNCQPSTAAVAAAQSVLRLSETNCDP. Residues 294–314 form a helical membrane-spanning segment; that stretch reads LLTVLGFAGAVGLTCLGLVVF.

The protein resides in the membrane. This is Leucine-rich repeat-containing protein 53 (LRRC53) from Macaca fascicularis (Crab-eating macaque).